Reading from the N-terminus, the 340-residue chain is Protein-lysine N-methyltransferase EEF2KMT (340 aa).

Methionine 1 is modified (N-acetylmethionine). S-adenosyl-L-methionine contacts are provided by residues tryptophan 139, glycine 165 to glycine 167, tryptophan 238, and alanine 257.

It belongs to the class I-like SAM-binding methyltransferase superfamily. EEF2KMT family. Interacts with FAM86B2 and FAM86C1P.

Its subcellular location is the cytoplasm. It carries out the reaction L-lysyl-[protein] + 3 S-adenosyl-L-methionine = N(6),N(6),N(6)-trimethyl-L-lysyl-[protein] + 3 S-adenosyl-L-homocysteine + 3 H(+). In terms of biological role, catalyzes the trimethylation of eukaryotic elongation factor 2 (EEF2) on 'Lys-525'. This Bos taurus (Bovine) protein is Protein-lysine N-methyltransferase EEF2KMT (EEF2KMT).